A 221-amino-acid chain; its full sequence is Deoxyribose-phosphate aldolase (221 aa).

Residue aspartate 91 is the Proton donor/acceptor of the active site. The active-site Schiff-base intermediate with acetaldehyde is the lysine 153. The active-site Proton donor/acceptor is lysine 182.

It belongs to the DeoC/FbaB aldolase family. DeoC type 1 subfamily.

It is found in the cytoplasm. It catalyses the reaction 2-deoxy-D-ribose 5-phosphate = D-glyceraldehyde 3-phosphate + acetaldehyde. Its pathway is carbohydrate degradation; 2-deoxy-D-ribose 1-phosphate degradation; D-glyceraldehyde 3-phosphate and acetaldehyde from 2-deoxy-alpha-D-ribose 1-phosphate: step 2/2. In terms of biological role, catalyzes a reversible aldol reaction between acetaldehyde and D-glyceraldehyde 3-phosphate to generate 2-deoxy-D-ribose 5-phosphate. This chain is Deoxyribose-phosphate aldolase, found in Clostridium botulinum (strain Alaska E43 / Type E3).